The sequence spans 96 residues: UPF0235 protein VV2877 (96 aa).

This sequence belongs to the UPF0235 family.

The polypeptide is UPF0235 protein VV2877 (Vibrio vulnificus (strain YJ016)).